A 233-amino-acid chain; its full sequence is Ribonuclease 3 (233 aa).

The region spanning 9-136 (LQHFWEQFHL…IIGSVYLSGG (128 aa)) is the RNase III domain. Glutamate 49 lines the Mg(2+) pocket. The active site involves aspartate 53. Aspartate 122 and glutamate 125 together coordinate Mg(2+). Residue glutamate 125 is part of the active site. One can recognise a DRBM domain in the interval 162–231 (DSKSALQEFV…ARAALALLKV (70 aa)).

Belongs to the ribonuclease III family. Homodimer. Mg(2+) serves as cofactor.

The protein localises to the cytoplasm. The catalysed reaction is Endonucleolytic cleavage to 5'-phosphomonoester.. Its function is as follows. Digests double-stranded RNA. Involved in the processing of primary rRNA transcript to yield the immediate precursors to the large and small rRNAs (23S and 16S). Processes some mRNAs, and tRNAs when they are encoded in the rRNA operon. Processes pre-crRNA and tracrRNA of type II CRISPR loci if present in the organism. In Moorella thermoacetica (strain ATCC 39073 / JCM 9320), this protein is Ribonuclease 3.